Reading from the N-terminus, the 417-residue chain is Gamma-glutamyl phosphate reductase (417 aa).

This sequence belongs to the gamma-glutamyl phosphate reductase family.

It is found in the cytoplasm. It carries out the reaction L-glutamate 5-semialdehyde + phosphate + NADP(+) = L-glutamyl 5-phosphate + NADPH + H(+). Its pathway is amino-acid biosynthesis; L-proline biosynthesis; L-glutamate 5-semialdehyde from L-glutamate: step 2/2. Functionally, catalyzes the NADPH-dependent reduction of L-glutamate 5-phosphate into L-glutamate 5-semialdehyde and phosphate. The product spontaneously undergoes cyclization to form 1-pyrroline-5-carboxylate. This is Gamma-glutamyl phosphate reductase from Escherichia fergusonii (strain ATCC 35469 / DSM 13698 / CCUG 18766 / IAM 14443 / JCM 21226 / LMG 7866 / NBRC 102419 / NCTC 12128 / CDC 0568-73).